Consider the following 111-residue polypeptide: Toxin 3FTx-Tri3 (111 aa).

The signal sequence occupies residues 1–19 (MKTLLLALVVVAFMCLGSA). Residues 20 to 34 (DEVGLGNEQIDRGRR) constitute a propeptide that is removed on maturation. Position 35 is a pyrrolidone carboxylic acid (Q35). Disulfide bonds link C44/C68, C47/C87, C91/C102, and C103/C108.

This sequence belongs to the three-finger toxin family. Ancestral subfamily. Boigatoxin sub-subfamily. In terms of tissue distribution, expressed by the venom gland.

The protein resides in the secreted. In terms of biological role, potent postsynaptic neurotoxin. Displays readily reversible competitive antagonism at the nicotinic acetylcholine receptor (nAChR). This is Toxin 3FTx-Tri3 from Trimorphodon biscutatus (Western lyre snake).